Consider the following 134-residue polypeptide: Large ribosomal subunit protein uL16c (134 aa).

This sequence belongs to the universal ribosomal protein uL16 family. As to quaternary structure, part of the 50S ribosomal subunit.

It localises to the plastid. Its subcellular location is the chloroplast. The chain is Large ribosomal subunit protein uL16c from Pinus koraiensis (Korean pine).